A 58-amino-acid polypeptide reads, in one-letter code: UPF0391 membrane protein Sputcn32_1322 (58 aa).

2 consecutive transmembrane segments (helical) span residues leucine 6–alanine 26 and alanine 28–valine 48.

This sequence belongs to the UPF0391 family.

The protein localises to the cell membrane. This Shewanella putrefaciens (strain CN-32 / ATCC BAA-453) protein is UPF0391 membrane protein Sputcn32_1322.